Here is a 180-residue protein sequence, read N- to C-terminus: Cell division protein ZapC (180 aa).

Belongs to the ZapC family. Interacts directly with FtsZ.

The protein resides in the cytoplasm. In terms of biological role, contributes to the efficiency of the cell division process by stabilizing the polymeric form of the cell division protein FtsZ. Acts by promoting interactions between FtsZ protofilaments and suppressing the GTPase activity of FtsZ. The sequence is that of Cell division protein ZapC from Vibrio cholerae serotype O1 (strain ATCC 39315 / El Tor Inaba N16961).